A 100-amino-acid chain; its full sequence is Protein translation factor SUI1 homolog (100 aa).

Belongs to the SUI1 family.

This is Protein translation factor SUI1 homolog from Thermoplasma volcanium (strain ATCC 51530 / DSM 4299 / JCM 9571 / NBRC 15438 / GSS1).